Here is a 210-residue protein sequence, read N- to C-terminus: Orotate phosphoribosyltransferase (210 aa).

5-phospho-alpha-D-ribose 1-diphosphate-binding positions include R96, K100, H102, and 122-130 (EDLISTGGS). S126 contributes to the orotate binding site.

It belongs to the purine/pyrimidine phosphoribosyltransferase family. PyrE subfamily. In terms of assembly, homodimer. Mg(2+) is required as a cofactor.

It carries out the reaction orotidine 5'-phosphate + diphosphate = orotate + 5-phospho-alpha-D-ribose 1-diphosphate. It functions in the pathway pyrimidine metabolism; UMP biosynthesis via de novo pathway; UMP from orotate: step 1/2. In terms of biological role, catalyzes the transfer of a ribosyl phosphate group from 5-phosphoribose 1-diphosphate to orotate, leading to the formation of orotidine monophosphate (OMP). This chain is Orotate phosphoribosyltransferase, found in Streptococcus pneumoniae (strain ATCC BAA-255 / R6).